The following is a 691-amino-acid chain: Germ cell nuclear acidic protein (691 aa).

The SUMO interaction motif 1 (SIM) motif lies at 22–25; that stretch reads ILNV. The interval 25-488 is disordered; sequence VQSSSDDTSG…GAAKVEKRKT (464 aa). Low complexity predominate over residues 27–36; the sequence is SSSDDTSGSS. The span at 48–63 shows a compositional bias: polar residues; sequence CILNVQSRSGDTSGSS. 3 consecutive short sequence motifs (SUMO interaction motif 1 (SIM)) follow at residues 76-79, 97-100, and 121-124; these read VVVI, LLEI, and IVIS. Residues 86 to 97 show a composition bias toward basic and acidic residues; that stretch reads ECHTHEEKKAKL. A compositionally biased stretch (acidic residues) spans 124–333; it reads SDDDNDDDNG…VPDDNSDDLE (210 aa). The span at 467 to 488 shows a compositional bias: basic residues; sequence GHKKRGPSKKKPGAAKVEKRKT. In terms of domain architecture, SprT-like spans 522–677; the sequence is VQRIYDLFNR…AKCKGSLVMV (156 aa).

The protein belongs to the serine-aspartate repeat-containing protein (SDr) family. In terms of assembly, interacts (via SIM domains) with SUMO2; this interaction allows the GCNA recruitment to DPCs sites. Interacts with TOP2A; this interaction allows the resolution of topoisomerase II (TOP2A) DNA-protein cross-links. As to expression, expressed in germ cells of the testis (at protein level). Detected in skeletal muscle, liver, kidney, pancreas, heart, lung and brain. Expressed throughout spermatogenesis, from spermatogonia to elongated spermatids, in normal adult testis (at protein level).

The protein localises to the nucleus. Its subcellular location is the PML body. The protein resides in the chromosome. Functionally, may play a role in DNA-protein cross-links (DPCs) clearance through a SUMO-dependent recruitment to sites of DPCs, ensuring the genomic stability by protecting germ cells and early embryos from various sources of damage. Can resolve the topoisomerase II (TOP2A) DPCs. This Homo sapiens (Human) protein is Germ cell nuclear acidic protein.